Consider the following 283-residue polypeptide: NAD kinase (283 aa).

The Proton acceptor role is filled by D67. Residues 67 to 68 (DG), R72, 136 to 137 (NE), K147, R164, D166, 177 to 182 (TAYSMS), and Q236 each bind NAD(+).

The protein belongs to the NAD kinase family. It depends on a divalent metal cation as a cofactor.

The protein localises to the cytoplasm. The enzyme catalyses NAD(+) + ATP = ADP + NADP(+) + H(+). Functionally, involved in the regulation of the intracellular balance of NAD and NADP, and is a key enzyme in the biosynthesis of NADP. Catalyzes specifically the phosphorylation on 2'-hydroxyl of the adenosine moiety of NAD to yield NADP. The polypeptide is NAD kinase (Methanothermobacter thermautotrophicus (strain ATCC 29096 / DSM 1053 / JCM 10044 / NBRC 100330 / Delta H) (Methanobacterium thermoautotrophicum)).